The following is a 247-amino-acid chain: MTILFLTMVISYFGCMKAAPMKEANVRGQGSLAYPGVRTHGTLESVNGPKAGSRRLTSLADTFEHVIEELLDEDQKGRPNEENSKDADLYTSRVMLSSQVPLEPPLLFLLEEYKNYLDAANMSVRVRRHSDPARRGELSVCDGISEWVTAADKKTAVDMSGGTVTVLEKVPVSKGQLKQYFYETKCNPMGYTKEGCRGIDKRHWNSQCRTTQSYVRALTMDSKKRIGWRFIRIDTSCVCTLTIKRGR.

The signal sequence occupies residues 1-18 (MTILFLTMVISYFGCMKA). The propeptide occupies 19-128 (APMKEANVRG…AANMSVRVRR (110 aa)). Residue Asn-121 is glycosylated (N-linked (GlcNAc...) asparagine). Intrachain disulfides connect Cys-141–Cys-208, Cys-186–Cys-237, and Cys-196–Cys-239.

This sequence belongs to the NGF-beta family. Monomers and homodimers. Binds to NTRK2/TRKB. Can form heterodimers with other neurotrophin family members, such as NTF3 and NTF4 (in vitro), but the physiological relevance of this is not clear. BDNF precursor form: interacts with the heterodimer formed by NGFR and SORCS2. Mature BDNF has much lower affinity for the heterodimer formed by NGFR and SORCS2. In terms of processing, N-glycosylated and glycosulfated, contrary to mature BDNF. Post-translationally, mature BDNF is produced by proteolytic removal of the propeptide, catalyzed by a FURIN family member. In addition, the precursor form is proteolytically cleaved within the propeptide, but this is not an obligatory intermediate for the production of mature BDNF. Can be converted into mature BDNF by plasmin (PLG).

It is found in the secreted. In terms of biological role, important signaling molecule that activates signaling cascades downstream of NTRK2. During development, promotes the survival and differentiation of selected neuronal populations of the peripheral and central nervous systems. Participates in axonal growth, pathfinding and in the modulation of dendritic growth and morphology. Major regulator of synaptic transmission and plasticity at adult synapses in many regions of the CNS. The versatility of BDNF is emphasized by its contribution to a range of adaptive neuronal responses including long-term potentiation (LTP), long-term depression (LTD), certain forms of short-term synaptic plasticity, as well as homeostatic regulation of intrinsic neuronal excitability. Functionally, important signaling molecule that activates signaling cascades downstream of NTRK2. Activates signaling cascades via the heterodimeric receptor formed by NGFR and SORCS2. Signaling via NGFR and SORCS2 plays a role in synaptic plasticity and long-term depression (LTD). Binding to NGFR and SORCS2 promotes neuronal apoptosis. Promotes neuronal growth cone collapse. The polypeptide is Neurotrophic factor BDNF precursor form (BDNF) (Felis catus (Cat)).